The following is a 382-amino-acid chain: Lipid-A-disaccharide synthase (382 aa).

It belongs to the LpxB family.

The enzyme catalyses 2-N,3-O-bis[(3R)-3-hydroxytetradecanoyl]-alpha-D-glucosaminyl 1-phosphate + UDP-2-N,3-O-bis[(3R)-3-hydroxytetradecanoyl]-alpha-D-glucosamine = lipid A disaccharide (E. coli) + UDP + H(+). It catalyses the reaction a lipid X + a UDP-2-N,3-O-bis[(3R)-3-hydroxyacyl]-alpha-D-glucosamine = a lipid A disaccharide + UDP + H(+). It participates in glycolipid biosynthesis; lipid IV(A) biosynthesis; lipid IV(A) from (3R)-3-hydroxytetradecanoyl-[acyl-carrier-protein] and UDP-N-acetyl-alpha-D-glucosamine: step 5/6. In terms of biological role, condensation of UDP-2,3-diacylglucosamine and 2,3-diacylglucosamine-1-phosphate to form lipid A disaccharide, a precursor of lipid A, a phosphorylated glycolipid that anchors the lipopolysaccharide to the outer membrane of the cell. The sequence is that of Lipid-A-disaccharide synthase from Salmonella agona (strain SL483).